Here is a 66-residue protein sequence, read N- to C-terminus: uncharacterized protein (66 aa).

This sequence to E.coli YfhJ.

This is an uncharacterized protein from Pseudomonas aeruginosa (strain ATCC 15692 / DSM 22644 / CIP 104116 / JCM 14847 / LMG 12228 / 1C / PRS 101 / PAO1).